The following is a 426-amino-acid chain: Serine--tRNA ligase (426 aa).

227–229 is a binding site for L-serine; sequence TSE. Residues 258 to 260 and Val274 contribute to the ATP site; that span reads RKE. Glu281 contacts L-serine. 345-348 serves as a coordination point for ATP; the sequence is ELTS. L-serine is bound at residue Thr380.

This sequence belongs to the class-II aminoacyl-tRNA synthetase family. Type-1 seryl-tRNA synthetase subfamily. In terms of assembly, homodimer. The tRNA molecule binds across the dimer.

The protein resides in the cytoplasm. It catalyses the reaction tRNA(Ser) + L-serine + ATP = L-seryl-tRNA(Ser) + AMP + diphosphate + H(+). The enzyme catalyses tRNA(Sec) + L-serine + ATP = L-seryl-tRNA(Sec) + AMP + diphosphate + H(+). Its pathway is aminoacyl-tRNA biosynthesis; selenocysteinyl-tRNA(Sec) biosynthesis; L-seryl-tRNA(Sec) from L-serine and tRNA(Sec): step 1/1. In terms of biological role, catalyzes the attachment of serine to tRNA(Ser). Is also able to aminoacylate tRNA(Sec) with serine, to form the misacylated tRNA L-seryl-tRNA(Sec), which will be further converted into selenocysteinyl-tRNA(Sec). This is Serine--tRNA ligase from Clavibacter michiganensis subsp. michiganensis (strain NCPPB 382).